Here is a 294-residue protein sequence, read N- to C-terminus: MPSDPEEDYIPWIQQLCELFGHDYFVQVSQDFIEDDFNLTGLSSQVPYYREALYTILDYQVETAEDHNTDNTTTNTSNNNDSRNGTSKRNASELPNKALLAHSAELLYGLIHARYIVSKQGLTAMASKFERNDFGSCPRYFCDGMHLIPVGSTDVPGQETVRLFCPCCNDIYIPSSSRYLNIDGAFFGTTFPGLLVKMFPEIENQCRIRITKFSQNDFGLKLFGFKINELSATGPRMKWLRMHPETEGEKQELTHVNIMFQLATYMKTKRMEEDDEEEEDEVEEEDDDRTMASE.

Disordered regions lie at residues 66 to 90 and 269 to 294; these read DHNTDNTTTNTSNNNDSRNGTSKRN and KRMEEDDEEEEDEVEEEDDDRTMASE. Positions 70-87 are enriched in low complexity; that stretch reads DNTTTNTSNNNDSRNGTS. Positions 273–288 are enriched in acidic residues; sequence EDDEEEEDEVEEEDDD.

Belongs to the casein kinase 2 subunit beta family. As to quaternary structure, tetramer composed of two alpha chains, one beta chain and one beta' chain. Phosphorylated by alpha subunit.

Its function is as follows. Regulatory subunit of casein kinase II/CK2. As part of the kinase complex regulates the basal catalytic activity of the alpha subunit a constitutively active serine/threonine-protein kinase that phosphorylates a large number of substrates containing acidic residues C-terminal to the phosphorylated serine or threonine. This chain is Casein kinase II subunit beta (CKB1), found in Candida albicans (Yeast).